A 330-amino-acid chain; its full sequence is MRVLAIESSCDETAVAIVEDGKLLSSVLSSQVNIHRKYGGVVPEIAARKHLENILFLLDEALDRASLKIDDIDVFAATQGPGLVGSLLVGLSLAKGLSISLNKPFVAVNHLIGHIYANFLSFPDLEYPFLVLLVSGGHTEILLAEDWNNFKRIGKTRDDAAGEAFDKVARLLGLGYPGGPEVELAARNGNPIYRFPRALNEKGNFDFSFSGLKTSVLYFLKNNPEARIEDVAAAFQEAVIDSLLTKTFAAAKTYGINKIVFAGGVAANTRLRERANEIAKEKDINIYFPPIEFCTDNAAMIAMVAYEKAKRGIFSPIDTNAIPYLSIVSL.

Histidine 110 and histidine 114 together coordinate Fe cation. Substrate contacts are provided by residues 133-137, aspartate 166, glycine 179, and asparagine 268; that span reads LVSGG. Aspartate 296 is a binding site for Fe cation.

Belongs to the KAE1 / TsaD family. It depends on Fe(2+) as a cofactor.

The protein resides in the cytoplasm. It carries out the reaction L-threonylcarbamoyladenylate + adenosine(37) in tRNA = N(6)-L-threonylcarbamoyladenosine(37) in tRNA + AMP + H(+). In terms of biological role, required for the formation of a threonylcarbamoyl group on adenosine at position 37 (t(6)A37) in tRNAs that read codons beginning with adenine. Is involved in the transfer of the threonylcarbamoyl moiety of threonylcarbamoyl-AMP (TC-AMP) to the N6 group of A37, together with TsaE and TsaB. TsaD likely plays a direct catalytic role in this reaction. This is tRNA N6-adenosine threonylcarbamoyltransferase from Kosmotoga olearia (strain ATCC BAA-1733 / DSM 21960 / TBF 19.5.1).